The chain runs to 38 residues: MTQPNPNKQSVELNRTSLYWGLLLIFVLAVLFSNYFFN.

The chain crosses the membrane as a helical span at residues 17 to 37 (SLYWGLLLIFVLAVLFSNYFF).

This sequence belongs to the PsbL family. In terms of assembly, PSII is composed of 1 copy each of membrane proteins PsbA, PsbB, PsbC, PsbD, PsbE, PsbF, PsbH, PsbI, PsbJ, PsbK, PsbL, PsbM, PsbT, PsbX, PsbY, PsbZ, Psb30/Ycf12, at least 3 peripheral proteins of the oxygen-evolving complex and a large number of cofactors. It forms dimeric complexes.

Its subcellular location is the plastid. It is found in the chloroplast thylakoid membrane. Functionally, one of the components of the core complex of photosystem II (PSII). PSII is a light-driven water:plastoquinone oxidoreductase that uses light energy to abstract electrons from H(2)O, generating O(2) and a proton gradient subsequently used for ATP formation. It consists of a core antenna complex that captures photons, and an electron transfer chain that converts photonic excitation into a charge separation. This subunit is found at the monomer-monomer interface and is required for correct PSII assembly and/or dimerization. This chain is Photosystem II reaction center protein L, found in Psilotum nudum (Whisk fern).